The chain runs to 257 residues: V-type proton ATPase subunit D (257 aa).

Residues 215 to 257 (KEQEAAQKALEGPGPGEDAAHSENNPPRNLLASEEDNLPVLFN) are disordered.

Belongs to the V-ATPase D subunit family. As to quaternary structure, V-ATPase is a heteromultimeric enzyme made up of two complexes: the ATP-hydrolytic V1 complex and the proton translocation V0 complex. The V1 complex consists of three catalytic AB heterodimers that form a heterohexamer, three peripheral stalks each consisting of EG heterodimers, one central rotor including subunits D and F, and the regulatory subunits C and H. The proton translocation complex V0 consists of the proton transport subunit a, a ring of proteolipid subunits c9c'', rotary subunit d, subunits e and f, and the accessory subunits vah-19/Ac45 and vah-20/PRR.

In terms of biological role, subunit of the V1 complex of vacuolar(H+)-ATPase (V-ATPase), a multisubunit enzyme composed of a peripheral complex (V1) that hydrolyzes ATP and a membrane integral complex (V0) that translocates protons. V-ATPase is responsible for acidifying and maintaining the pH of intracellular compartments and in some cell types, is targeted to the plasma membrane, where it is responsible for acidifying the extracellular environment. The sequence is that of V-type proton ATPase subunit D from Caenorhabditis elegans.